The following is a 472-amino-acid chain: Eukaryotic translation initiation factor 2 subunit 3 (472 aa).

Position 2 is an N-acetylalanine (alanine 2). Residue serine 16 is modified to Phosphoserine. Residues 39–248 enclose the tr-type G domain; sequence QATINIGTIG…IVKKIPVPPR (210 aa). The interval 48-55 is G1; that stretch reads GHVAHGKS. 51–56 is a binding site for GTP; it reads AHGKST. The G2 stretch occupies residues 76–80; it reads NITIK. Residues 134-137 form a G3 region; the sequence is DCPG. Residues 190-193 and 225-227 each bind GTP; these read NKID and SAQ. Residues 190-193 are G4; the sequence is NKID. The interval 225–227 is G5; that stretch reads SAQ. The interval 457–469 is interacts with CDC123; that stretch reads GQIRRGVTIKPTV.

The protein belongs to the TRAFAC class translation factor GTPase superfamily. Classic translation factor GTPase family. EIF2G subfamily. Eukaryotic translation initiation factor 2 eIF2 is a heterotrimeric complex composed of an alpha (EIF2S1), a beta (EIF2S2) and a gamma (EIF2S3) chain. eIF2 is member of the 43S pre-initiation complex (43S PIC). Interacts (via C-terminus) with CDC123; the interaction is direct.

It localises to the cytoplasm. The protein resides in the cytosol. It catalyses the reaction GTP + H2O = GDP + phosphate + H(+). In terms of biological role, member of the eIF2 complex that functions in the early steps of protein synthesis by forming a ternary complex with GTP and initiator tRNA. This complex binds to a 40S ribosomal subunit, followed by mRNA binding to form the 43S pre-initiation complex (43S PIC). Junction of the 60S ribosomal subunit to form the 80S initiation complex is preceded by hydrolysis of the GTP bound to eIF2 and release of an eIF2-GDP binary complex. In order for eIF2 to recycle and catalyze another round of initiation, the GDP bound to eIF2 must exchange with GTP by way of a reaction catalyzed by eIF-2B. This Pongo abelii (Sumatran orangutan) protein is Eukaryotic translation initiation factor 2 subunit 3 (EIF2S3).